The chain runs to 181 residues: Large ribosomal subunit protein uL5 (181 aa).

The protein belongs to the universal ribosomal protein uL5 family. As to quaternary structure, part of the 50S ribosomal subunit; part of the 5S rRNA/L5/L18/L25 subcomplex. Contacts the 5S rRNA and the P site tRNA. Forms a bridge to the 30S subunit in the 70S ribosome.

In terms of biological role, this is one of the proteins that bind and probably mediate the attachment of the 5S RNA into the large ribosomal subunit, where it forms part of the central protuberance. In the 70S ribosome it contacts protein S13 of the 30S subunit (bridge B1b), connecting the 2 subunits; this bridge is implicated in subunit movement. Contacts the P site tRNA; the 5S rRNA and some of its associated proteins might help stabilize positioning of ribosome-bound tRNAs. This chain is Large ribosomal subunit protein uL5, found in Campylobacter jejuni subsp. jejuni serotype O:6 (strain 81116 / NCTC 11828).